Reading from the N-terminus, the 621-residue chain is tRNA uridine 5-carboxymethylaminomethyl modification enzyme MnmG (621 aa).

FAD is bound at residue 9–14 (GGGHAG). 270-284 (GPRYCPSIEDKIVKF) contributes to the NAD(+) binding site.

This sequence belongs to the MnmG family. As to quaternary structure, homodimer. Heterotetramer of two MnmE and two MnmG subunits. The cofactor is FAD.

The protein localises to the cytoplasm. Functionally, NAD-binding protein involved in the addition of a carboxymethylaminomethyl (cmnm) group at the wobble position (U34) of certain tRNAs, forming tRNA-cmnm(5)s(2)U34. This chain is tRNA uridine 5-carboxymethylaminomethyl modification enzyme MnmG, found in Borrelia garinii subsp. bavariensis (strain ATCC BAA-2496 / DSM 23469 / PBi) (Borreliella bavariensis).